Reading from the N-terminus, the 469-residue chain is Argininosuccinate lyase (469 aa).

It belongs to the lyase 1 family. Argininosuccinate lyase subfamily.

The protein resides in the cytoplasm. It catalyses the reaction 2-(N(omega)-L-arginino)succinate = fumarate + L-arginine. Its pathway is amino-acid biosynthesis; L-arginine biosynthesis; L-arginine from L-ornithine and carbamoyl phosphate: step 3/3. The sequence is that of Argininosuccinate lyase from Burkholderia thailandensis (strain ATCC 700388 / DSM 13276 / CCUG 48851 / CIP 106301 / E264).